A 347-amino-acid chain; its full sequence is Tyrosine recombinase XerC 2 (347 aa).

Residues 17–108 (LVLTRYMEAH…PLKTWFKWLA (92 aa)) enclose the Core-binding (CB) domain. In terms of domain architecture, Tyr recombinase spans 125–313 (KLPKHLPRAI…SIEHLRAIHD (189 aa)). Residues arginine 170, lysine 195, histidine 265, arginine 268, and histidine 291 contribute to the active site. Tyrosine 300 serves as the catalytic O-(3'-phospho-DNA)-tyrosine intermediate.

Belongs to the 'phage' integrase family.

The protein localises to the cytoplasm. Functionally, site-specific tyrosine recombinase, which acts by catalyzing the cutting and rejoining of the recombining DNA molecules. In Ralstonia nicotianae (strain ATCC BAA-1114 / GMI1000) (Ralstonia solanacearum), this protein is Tyrosine recombinase XerC 2.